Here is a 437-residue protein sequence, read N- to C-terminus: GTPase Obg (437 aa).

The 159-residue stretch at 2–160 (SMFLDTAKIS…RQLELELKIL (159 aa)) folds into the Obg domain. The OBG-type G domain maps to 161 to 338 (ADVGLVGFPS…LLEATAELLA (178 aa)). Residues 167–174 (GFPSVGKS), 192–196 (FTTIV), 214–217 (DLPG), 284–287 (NKMD), and 319–321 (SSL) contribute to the GTP site. Mg(2+) is bound by residues serine 174 and threonine 194. The 79-residue stretch at 359 to 437 (GFAETEKDFE…IGKFEFEFVD (79 aa)) folds into the OCT domain.

It belongs to the TRAFAC class OBG-HflX-like GTPase superfamily. OBG GTPase family. Monomer. The cofactor is Mg(2+).

It localises to the cytoplasm. Its function is as follows. An essential GTPase which binds GTP, GDP and possibly (p)ppGpp with moderate affinity, with high nucleotide exchange rates and a fairly low GTP hydrolysis rate. Plays a role in control of the cell cycle, stress response, ribosome biogenesis and in those bacteria that undergo differentiation, in morphogenesis control. This Streptococcus pyogenes serotype M4 (strain MGAS10750) protein is GTPase Obg.